The primary structure comprises 87 residues: Small ribosomal subunit protein bS20 (87 aa).

Over residues 1–11 the composition is skewed to basic residues; the sequence is MAHHKSAIKRI. The interval 1–26 is disordered; the sequence is MAHHKSAIKRIKQNEKRNARNRHQKS.

The protein belongs to the bacterial ribosomal protein bS20 family.

Its function is as follows. Binds directly to 16S ribosomal RNA. The polypeptide is Small ribosomal subunit protein bS20 (Trichlorobacter lovleyi (strain ATCC BAA-1151 / DSM 17278 / SZ) (Geobacter lovleyi)).